Consider the following 204-residue polypeptide: UPF0637 protein lin1053 (204 aa).

It belongs to the UPF0637 family.

This is UPF0637 protein lin1053 from Listeria innocua serovar 6a (strain ATCC BAA-680 / CLIP 11262).